Reading from the N-terminus, the 107-residue chain is Acidic phospholipase A2 braziliase-I (107 aa).

Cystine bridges form between Cys26–Cys100, Cys28–Cys44, Cys43–Cys86, Cys49–Cys107, Cys50–Cys79, Cys57–Cys72, and Cys66–Cys77. Ca(2+) contacts are provided by Tyr27, Gly29, and Gly31. His47 is an active-site residue. Asp48 serves as a coordination point for Ca(2+). Asp80 is an active-site residue.

As to quaternary structure, monomer. Ca(2+) is required as a cofactor. Expressed by the venom gland.

The protein resides in the secreted. It carries out the reaction a 1,2-diacyl-sn-glycero-3-phosphocholine + H2O = a 1-acyl-sn-glycero-3-phosphocholine + a fatty acid + H(+). Functionally, snake venom phospholipase A2 (PLA2) that induces significant edematogenic activity. Shows mild cytotoxicity on Trypanosoma cruzi and Leishmania infantum. Also inhibits ADP- and collagen-induced platelet aggregation. Does not show myotoxic activity. This is Acidic phospholipase A2 braziliase-I from Bothrops brazili (Brazil's lancehead).